The sequence spans 102 residues: Protein C4 (102 aa).

Residues 1–27 are compositionally biased toward low complexity; sequence MRMGSLISTCLSSSKASSSARINDSST. Disordered stretches follow at residues 1–35 and 47–86; these read MRMG…PGQH and RQTS…LTPR.

Belongs to the geminiviridae protein AC4/C4 family.

In terms of biological role, pathogenicity determinant. May act as a suppressor of RNA-mediated gene silencing, also known as post-transcriptional gene silencing (PTGS), a mechanism of plant viral defense that limits the accumulation of viral RNAs. The chain is Protein C4 from Cynanchum acutum (Little mallow).